We begin with the raw amino-acid sequence, 511 residues long: uncharacterized protein (511 aa).

This is an uncharacterized protein from Acanthamoeba polyphaga (Amoeba).